A 177-amino-acid chain; its full sequence is Large ribosomal subunit protein uL6 (177 aa).

The protein belongs to the universal ribosomal protein uL6 family. In terms of assembly, part of the 50S ribosomal subunit.

In terms of biological role, this protein binds to the 23S rRNA, and is important in its secondary structure. It is located near the subunit interface in the base of the L7/L12 stalk, and near the tRNA binding site of the peptidyltransferase center. The chain is Large ribosomal subunit protein uL6 from Rickettsia bellii (strain OSU 85-389).